Reading from the N-terminus, the 305-residue chain is Nitrogen assimilation regulatory protein nac (305 aa).

The region spanning 1 to 58 (MNLRRLKYFVKIVDIGSLTQAAEVLHIAQPALSQQVATLEGEMDQQLLIRTKRGVTPT) is the HTH lysR-type domain. The segment at residues 18-37 (LTQAAEVLHIAQPALSQQVA) is a DNA-binding region (H-T-H motif).

It belongs to the LysR transcriptional regulatory family.

Functionally, transcriptional activator for the hut, put and ure operons and repressor for the gdh and gltB operons in response to nitrogen limitation. Negative regulator of its own expression. In Klebsiella aerogenes (Enterobacter aerogenes), this protein is Nitrogen assimilation regulatory protein nac (nac).